Reading from the N-terminus, the 220-residue chain is dITP/XTP pyrophosphatase (220 aa).

Residue Ser13 to Lys18 coordinates substrate. Mg(2+)-binding residues include Asp45 and Asp74. Residue Asp74 is the Proton acceptor of the active site. Substrate is bound by residues Ser75, Phe163–Asp166, Lys186, and His199–Arg200.

Belongs to the HAM1 NTPase family. In terms of assembly, homodimer. Mg(2+) is required as a cofactor.

The catalysed reaction is XTP + H2O = XMP + diphosphate + H(+). The enzyme catalyses dITP + H2O = dIMP + diphosphate + H(+). It catalyses the reaction ITP + H2O = IMP + diphosphate + H(+). Pyrophosphatase that catalyzes the hydrolysis of nucleoside triphosphates to their monophosphate derivatives, with a high preference for the non-canonical purine nucleotides XTP (xanthosine triphosphate), dITP (deoxyinosine triphosphate) and ITP. Seems to function as a house-cleaning enzyme that removes non-canonical purine nucleotides from the nucleotide pool, thus preventing their incorporation into DNA/RNA and avoiding chromosomal lesions. The chain is dITP/XTP pyrophosphatase from Brucella melitensis biotype 1 (strain ATCC 23456 / CCUG 17765 / NCTC 10094 / 16M).